Here is a 319-residue protein sequence, read N- to C-terminus: ATP-dependent 6-phosphofructokinase (319 aa).

ATP contacts are provided by residues Gly10, Arg71 to Ser72, and Gly101 to Ser104. Asp102 is a Mg(2+) binding site. Thr125–Asp127 provides a ligand contact to substrate. The Proton acceptor role is filled by Asp127. ADP is bound at residue Arg154. Residues Arg162 and Met169–Arg171 each bind substrate. Gly185–Glu187 serves as a coordination point for ADP. Residues Glu223, Arg244, and His250 to Arg253 each bind substrate.

The protein belongs to the phosphofructokinase type A (PFKA) family. ATP-dependent PFK group I subfamily. Prokaryotic clade 'B1' sub-subfamily. Homotetramer. Mg(2+) is required as a cofactor.

The protein localises to the cytoplasm. It catalyses the reaction beta-D-fructose 6-phosphate + ATP = beta-D-fructose 1,6-bisphosphate + ADP + H(+). It functions in the pathway carbohydrate degradation; glycolysis; D-glyceraldehyde 3-phosphate and glycerone phosphate from D-glucose: step 3/4. Allosterically activated by ADP and other diphosphonucleosides, and allosterically inhibited by phosphoenolpyruvate. Catalyzes the phosphorylation of D-fructose 6-phosphate to fructose 1,6-bisphosphate by ATP, the first committing step of glycolysis. The chain is ATP-dependent 6-phosphofructokinase from Wolinella succinogenes (strain ATCC 29543 / DSM 1740 / CCUG 13145 / JCM 31913 / LMG 7466 / NCTC 11488 / FDC 602W) (Vibrio succinogenes).